Consider the following 721-residue polypeptide: Polyphosphate kinase (721 aa).

Residue asparagine 54 participates in ATP binding. 2 residues coordinate Mg(2+): arginine 379 and arginine 409. The PLD phosphodiesterase domain occupies threonine 434 to threonine 468. Residue histidine 439 is the Phosphohistidine intermediate of the active site. Positions 472, 568, and 596 each coordinate ATP.

Belongs to the polyphosphate kinase 1 (PPK1) family. Requires Mg(2+) as cofactor. In terms of processing, an intermediate of this reaction is the autophosphorylated ppk in which a phosphate is covalently linked to a histidine residue through a N-P bond.

It carries out the reaction [phosphate](n) + ATP = [phosphate](n+1) + ADP. Its function is as follows. Catalyzes the reversible transfer of the terminal phosphate of ATP to form a long-chain polyphosphate (polyP). The sequence is that of Polyphosphate kinase from Staphylococcus haemolyticus (strain JCSC1435).